The chain runs to 137 residues: Ribonuclease VapC27 (137 aa).

One can recognise a PINc domain in the interval 7 to 125 (VDTSVAIPLL…ATRDARAKDT (119 aa)). Mg(2+) contacts are provided by D8 and D101.

This sequence belongs to the PINc/VapC protein family. In terms of assembly, interacts with cognate antitoxin VapB27. It depends on Mg(2+) as a cofactor.

The protein localises to the secreted. Functionally, probably the toxic component of a type II toxin-antitoxin (TA) system. An RNase. Its cognate antitoxin is VapB27. The sequence is that of Ribonuclease VapC27 from Mycobacterium tuberculosis (strain ATCC 25618 / H37Rv).